Here is a 471-residue protein sequence, read N- to C-terminus: tRNA(Ile)-lysidine synthase (471 aa).

27–32 (SGGPDS) contacts ATP.

It belongs to the tRNA(Ile)-lysidine synthase family.

The protein localises to the cytoplasm. It catalyses the reaction cytidine(34) in tRNA(Ile2) + L-lysine + ATP = lysidine(34) in tRNA(Ile2) + AMP + diphosphate + H(+). Functionally, ligates lysine onto the cytidine present at position 34 of the AUA codon-specific tRNA(Ile) that contains the anticodon CAU, in an ATP-dependent manner. Cytidine is converted to lysidine, thus changing the amino acid specificity of the tRNA from methionine to isoleucine. The chain is tRNA(Ile)-lysidine synthase from Dehalococcoides mccartyi (strain CBDB1).